The following is a 200-amino-acid chain: Probable fatty acid desaturase MIMI_L630 (200 aa).

2 consecutive transmembrane segments (helical) span residues Phe9–Ile29 and Ile79–Ile99.

Belongs to the fatty acid desaturase CarF family.

It is found in the membrane. The sequence is that of Probable fatty acid desaturase MIMI_L630 from Acanthamoeba polyphaga mimivirus (APMV).